The following is a 471-amino-acid chain: Probable anion transporter 5, chloroplastic (471 aa).

The transit peptide at 1–59 (MAASASASALQAERCLLVGVGAGPRRHRLPLRMPPPLHAPPALLLLPHRRRRRWPPAVR) directs the protein to the chloroplast. Positions 56–76 (PAVRASPGEGGGGGGGGGGGG) are disordered. Helical transmembrane passes span 62–82 (PGEG…AGAL), 103–123 (IGVV…GFMP), 162–182 (VVFG…PPII), and 185–205 (LGWE…CLGF). Residues 63 to 76 (GEGGGGGGGGGGGG) show a composition bias toward gly residues. A disordered region spans residues 226-247 (GQSPSGSSDLISSSVSPKSSES). Residues 228 to 247 (SPSGSSDLISSSVSPKSSES) are compositionally biased toward low complexity. 6 helical membrane passes run 270 to 290 (VWAM…CLSW), 307 to 327 (AWVS…AAPF), 348 to 368 (IAFL…GVPP), 371 to 391 (IVAF…GLYC), 403 to 423 (ILLG…VALT), and 435 to 455 (ISLF…WLAF).

The protein belongs to the major facilitator superfamily. Sodium/anion cotransporter (TC 2.A.1.14) family.

It localises to the plastid. The protein localises to the chloroplast membrane. In terms of biological role, probable anion transporter. This is Probable anion transporter 5, chloroplastic (PHT4;5) from Oryza sativa subsp. japonica (Rice).